The primary structure comprises 135 residues: Early nodulin-5 (135 aa).

An N-terminal signal peptide occupies residues 1–23 (MASSSSPIFLMIIFSMWLLFSYS).

In terms of tissue distribution, invasion zone and early symbiotic zone.

Functionally, involved in the infection process during the plant-rhizobium interaction. This is Early nodulin-5 (ENOD5) from Pisum sativum (Garden pea).